A 346-amino-acid polypeptide reads, in one-letter code: Dihydroorotase (346 aa).

Histidine 13 and histidine 15 together coordinate Zn(2+). Residues 15 to 17 and asparagine 41 each bind substrate; that span reads HLR. Zn(2+) is bound by residues lysine 99, histidine 136, and histidine 174. Lysine 99 bears the N6-carboxylysine mark. Residue histidine 136 coordinates substrate. Substrate is bound at residue leucine 219. Aspartate 247 serves as a coordination point for Zn(2+). Aspartate 247 is an active-site residue. Substrate is bound by residues histidine 251 and alanine 263.

Belongs to the metallo-dependent hydrolases superfamily. DHOase family. Class II DHOase subfamily. Homodimer. Requires Zn(2+) as cofactor.

It carries out the reaction (S)-dihydroorotate + H2O = N-carbamoyl-L-aspartate + H(+). Its pathway is pyrimidine metabolism; UMP biosynthesis via de novo pathway; (S)-dihydroorotate from bicarbonate: step 3/3. Functionally, catalyzes the reversible cyclization of carbamoyl aspartate to dihydroorotate. This chain is Dihydroorotase, found in Chelativorans sp. (strain BNC1).